A 947-amino-acid polypeptide reads, in one-letter code: Isoleucine--tRNA ligase (947 aa).

The 'HIGH' region signature appears at 57 to 67 (PYANGNIHLGH). Glu568 contributes to the L-isoleucyl-5'-AMP binding site. Residues 609 to 613 (KMSKS) carry the 'KMSKS' region motif. Lys612 contacts ATP. Residues Cys908, Cys911, Cys926, and Cys929 each contribute to the Zn(2+) site.

The protein belongs to the class-I aminoacyl-tRNA synthetase family. IleS type 1 subfamily. As to quaternary structure, monomer. Zn(2+) is required as a cofactor.

Its subcellular location is the cytoplasm. The catalysed reaction is tRNA(Ile) + L-isoleucine + ATP = L-isoleucyl-tRNA(Ile) + AMP + diphosphate. Catalyzes the attachment of isoleucine to tRNA(Ile). As IleRS can inadvertently accommodate and process structurally similar amino acids such as valine, to avoid such errors it has two additional distinct tRNA(Ile)-dependent editing activities. One activity is designated as 'pretransfer' editing and involves the hydrolysis of activated Val-AMP. The other activity is designated 'posttransfer' editing and involves deacylation of mischarged Val-tRNA(Ile). The chain is Isoleucine--tRNA ligase from Persephonella marina (strain DSM 14350 / EX-H1).